Here is a 401-residue protein sequence, read N- to C-terminus: MLKHDSMQVSQDQPIYSEAPLQLLLFVDGRPKSKQQVQRIRAYLKDLQAEYNFELQIIDVGQQPYLAEHFKLVATPALIKIHPEPRQILAGSNIITQLKNLWPRWQAAADTYAKLQEDLQERVDDNGRVAQPQSTINSVAVSAELLRLSDEIFNLKQEKEKLLEQLQFKDRVIAMLVHDLRNPLTAAAIAIETLQSNYNPDIGQFQRLKPALVVNLLRQARTQAKTIDKMIADLLQVGRGTDTELIIIPQKTEIGLLCLEVLGELRDRYTTKAQKVETDIPQDLPCVYADPERIRQVLINLLDNAIKYTPEGGTISIAGLHRTTQKVQFSIGDTGPGIPSDNRERIFENHYRLERDEAKEGYGIGLSLCQRIIRAHYGQIWVDSNPHGGAWFHFTLPVYPS.

The Histidine kinase domain maps to 175–400 (MLVHDLRNPL…WFHFTLPVYP (226 aa)). At H178 the chain carries Phosphohistidine; by autocatalysis.

In terms of assembly, homooligomerizes. Interacts with KaiC. Participates in the KaiABC clock complex, whose core is composed of a KaiC homohexamer, 6 KaiB and up to 6 KaiA dimers. SasA and KaiB(fs) compete to bind to KaiC.

The enzyme catalyses ATP + protein L-histidine = ADP + protein N-phospho-L-histidine.. Functionally, member of the two-component regulatory system SasA/RpaA involved in genome-wide circadian gene expression. One of several clock output pathways. Participates in the Kai clock protein complex, the main circadian regulator in cyanobacteria, via its interaction with KaiC. KaiC enhances the autophosphorylation activity of SasA, which then transfers its phosphate group to RpaA to activate it. In addition to its output function, recruits fold-shifted KaiB (KaiB(fs)) to KaiC to cooperatively form the KaiB(6):KaiC(6) complex (independent of SasA kinase activity). Required for robustness of the circadian rhythm of gene expression and is involved in clock output, also required for adaptation to light/dark cycles. This chain is Adaptive-response sensory kinase SasA, found in Nostoc sp. (strain PCC 7120 / SAG 25.82 / UTEX 2576).